We begin with the raw amino-acid sequence, 26 residues long: Mu-theraphotoxin-Phlo2a (26 aa).

3 disulfide bridges follow: Cys2/Cys16, Cys9/Cys21, and Cys15/Cys25.

The protein belongs to the neurotoxin 30 (phrixotoxin) family. In terms of tissue distribution, expressed by the venom gland.

Its subcellular location is the secreted. Functionally, gating-modifier toxin that non-selectively inhibits voltage-gated sodium channel Nav by shifting the threshold for channel activation to more positive potentials. This toxin moderately inhibits human Nav1.2/SCN2A (IC(50)=404 nM), Nav1.5/SCN5A (IC(50)=218 nM) and Nav1.7/SCN9A (IC(50)=333 nM). Inhibition of Nav1.7 is voltage-dependent, with lower inhibition at more positive test pulses. This chain is Mu-theraphotoxin-Phlo2a, found in Phlogius sp. (Tarantula spider).